A 498-amino-acid chain; its full sequence is Beta-amylase 5 (498 aa).

Residues Asp-56, His-96, and Asp-104 each coordinate substrate. The active-site Proton donor is Glu-189. The substrate site is built by Lys-298, His-303, and Thr-345. Glu-383 acts as the Proton acceptor in catalysis. Residues 384–385 (NA) and Arg-423 contribute to the substrate site.

This sequence belongs to the glycosyl hydrolase 14 family. As to expression, detected in phloem sieve elements.

The protein resides in the cytoplasm. The catalysed reaction is Hydrolysis of (1-&gt;4)-alpha-D-glucosidic linkages in polysaccharides so as to remove successive maltose units from the non-reducing ends of the chains.. Beta-amylase activity. Major cytosolic beta-amylase isoform in rosette leaves and inflorescences stems. The chain is Beta-amylase 5 (BAM5) from Arabidopsis thaliana (Mouse-ear cress).